Reading from the N-terminus, the 257-residue chain is Probable enoyl-CoA hydratase (257 aa).

It belongs to the enoyl-CoA hydratase/isomerase family.

It catalyses the reaction a (3S)-3-hydroxyacyl-CoA = a (2E)-enoyl-CoA + H2O. The catalysed reaction is a 4-saturated-(3S)-3-hydroxyacyl-CoA = a (3E)-enoyl-CoA + H2O. Its function is as follows. Could possibly oxidize fatty acids using specific components. The chain is Probable enoyl-CoA hydratase (fadB1) from Rhizobium meliloti (strain 1021) (Ensifer meliloti).